The sequence spans 836 residues: uncharacterized protein (836 aa).

Disordered stretches follow at residues M1 to E25, D692 to R718, and E789 to S836. 2 stretches are compositionally biased toward polar residues: residues E789–R799 and I825–S836.

It is found in the nucleus. This is an uncharacterized protein from Schizosaccharomyces pombe (strain 972 / ATCC 24843) (Fission yeast).